A 149-amino-acid chain; its full sequence is 3-hydroxyacyl-[acyl-carrier-protein] dehydratase FabZ (149 aa).

His47 is an active-site residue.

It belongs to the thioester dehydratase family. FabZ subfamily.

Its subcellular location is the cytoplasm. It catalyses the reaction a (3R)-hydroxyacyl-[ACP] = a (2E)-enoyl-[ACP] + H2O. Involved in unsaturated fatty acids biosynthesis. Catalyzes the dehydration of short chain beta-hydroxyacyl-ACPs and long chain saturated and unsaturated beta-hydroxyacyl-ACPs. The polypeptide is 3-hydroxyacyl-[acyl-carrier-protein] dehydratase FabZ (Thioalkalivibrio sulfidiphilus (strain HL-EbGR7)).